We begin with the raw amino-acid sequence, 336 residues long: tRNA N6-adenosine threonylcarbamoyltransferase (336 aa).

H110 and H114 together coordinate Fe cation. Substrate is bound by residues 133–137, D166, G179, and N271; that span reads LVSGK. Fe cation is bound at residue D300.

Belongs to the KAE1 / TsaD family. It depends on Fe(2+) as a cofactor.

The protein localises to the cytoplasm. The catalysed reaction is L-threonylcarbamoyladenylate + adenosine(37) in tRNA = N(6)-L-threonylcarbamoyladenosine(37) in tRNA + AMP + H(+). In terms of biological role, required for the formation of a threonylcarbamoyl group on adenosine at position 37 (t(6)A37) in tRNAs that read codons beginning with adenine. Is involved in the transfer of the threonylcarbamoyl moiety of threonylcarbamoyl-AMP (TC-AMP) to the N6 group of A37, together with TsaE and TsaB. TsaD likely plays a direct catalytic role in this reaction. This chain is tRNA N6-adenosine threonylcarbamoyltransferase, found in Buchnera aphidicola subsp. Acyrthosiphon pisum (strain 5A).